Consider the following 205-residue polypeptide: Protein GrpE (205 aa).

The segment at lysine 172–alanine 205 is disordered. Low complexity predominate over residues proline 177–alanine 195.

The protein belongs to the GrpE family. In terms of assembly, homodimer.

It localises to the cytoplasm. Participates actively in the response to hyperosmotic and heat shock by preventing the aggregation of stress-denatured proteins, in association with DnaK and GrpE. It is the nucleotide exchange factor for DnaK and may function as a thermosensor. Unfolded proteins bind initially to DnaJ; upon interaction with the DnaJ-bound protein, DnaK hydrolyzes its bound ATP, resulting in the formation of a stable complex. GrpE releases ADP from DnaK; ATP binding to DnaK triggers the release of the substrate protein, thus completing the reaction cycle. Several rounds of ATP-dependent interactions between DnaJ, DnaK and GrpE are required for fully efficient folding. This Caulobacter sp. (strain K31) protein is Protein GrpE.